We begin with the raw amino-acid sequence, 74 residues long: Imcroporin (74 aa).

The signal sequence occupies residues 1 to 22 (MKFQYLLAVFLIVLVVTDHCQA). A Lysine amide; partial modification is found at lysine 39. The propeptide occupies 45-74 (QLEARFEPKQRNFRKRELDFEKLFANMPDY).

The protein belongs to the non-disulfide-bridged peptide (NDBP) superfamily. Short antimicrobial peptide (group 4) family. Expressed by the venom gland.

It is found in the secreted. The protein localises to the target cell membrane. Has potent antibacterial activity against Gram-positive bacteria M.luteus, B.thuringiensis, S.aureus and B.subtilis, but not Gram-negative bacteria. Shows a weak cytotoxicity effect against mammalian cell lines and relatively low hemolytic activity against human erythrocytes. In Isometrus maculatus (Lesser brown scorpion), this protein is Imcroporin.